The primary structure comprises 403 residues: Cysteine desulfurase IscS (403 aa).

Pyridoxal 5'-phosphate is bound by residues 73–74 (AT), Asn153, Gln181, and 201–203 (SAH). At Lys204 the chain carries N6-(pyridoxal phosphate)lysine. Pyridoxal 5'-phosphate is bound at residue Thr241. Cys326 serves as the catalytic Cysteine persulfide intermediate. Cys326 lines the [2Fe-2S] cluster pocket.

This sequence belongs to the class-V pyridoxal-phosphate-dependent aminotransferase family. NifS/IscS subfamily. As to quaternary structure, homodimer. Forms a heterotetramer with IscU, interacts with other sulfur acceptors. It depends on pyridoxal 5'-phosphate as a cofactor.

The protein resides in the cytoplasm. The catalysed reaction is (sulfur carrier)-H + L-cysteine = (sulfur carrier)-SH + L-alanine. It participates in cofactor biosynthesis; iron-sulfur cluster biosynthesis. In terms of biological role, master enzyme that delivers sulfur to a number of partners involved in Fe-S cluster assembly, tRNA modification or cofactor biosynthesis. Catalyzes the removal of elemental sulfur atoms from cysteine to produce alanine. Functions as a sulfur delivery protein for Fe-S cluster synthesis onto IscU, an Fe-S scaffold assembly protein, as well as other S acceptor proteins. The polypeptide is Cysteine desulfurase IscS (Methylococcus capsulatus (strain ATCC 33009 / NCIMB 11132 / Bath)).